The chain runs to 901 residues: MutS protein homolog 5 (901 aa).

643 to 650 provides a ligand contact to ATP; the sequence is GANASGKS.

It belongs to the DNA mismatch repair MutS family. In terms of assembly, heterooligomer of MSH4 and MSH5.

Its function is as follows. Involved in meiotic recombination. Facilitate crossovers between homologs during meiosis. The polypeptide is MutS protein homolog 5 (MSH5) (Saccharomyces cerevisiae (strain ATCC 204508 / S288c) (Baker's yeast)).